The sequence spans 704 residues: Elongation factor G (704 aa).

In terms of domain architecture, tr-type G spans Val8–Ser291. GTP contacts are provided by residues Ala17–Thr24, Asp88–His92, and Asn142–Asp145.

Belongs to the TRAFAC class translation factor GTPase superfamily. Classic translation factor GTPase family. EF-G/EF-2 subfamily.

Its subcellular location is the cytoplasm. Its function is as follows. Catalyzes the GTP-dependent ribosomal translocation step during translation elongation. During this step, the ribosome changes from the pre-translocational (PRE) to the post-translocational (POST) state as the newly formed A-site-bound peptidyl-tRNA and P-site-bound deacylated tRNA move to the P and E sites, respectively. Catalyzes the coordinated movement of the two tRNA molecules, the mRNA and conformational changes in the ribosome. The chain is Elongation factor G from Blochmanniella pennsylvanica (strain BPEN).